A 137-amino-acid polypeptide reads, in one-letter code: Small ribosomal subunit protein bS6 (137 aa).

Residues 99–137 (LSPMKAAESREDRRSGGDDRPRRSADSEERQSASQDEEE) are disordered. Positions 105–129 (AESREDRRSGGDDRPRRSADSEERQ) are enriched in basic and acidic residues.

It belongs to the bacterial ribosomal protein bS6 family.

Its function is as follows. Binds together with bS18 to 16S ribosomal RNA. In Marinobacter nauticus (strain ATCC 700491 / DSM 11845 / VT8) (Marinobacter aquaeolei), this protein is Small ribosomal subunit protein bS6.